A 190-amino-acid polypeptide reads, in one-letter code: Xanthine phosphoribosyltransferase (190 aa).

Residues Leu20 and Asn27 each coordinate xanthine. Residue 128–132 (ANGKA) coordinates 5-phospho-alpha-D-ribose 1-diphosphate. Lys156 is a binding site for xanthine.

It belongs to the purine/pyrimidine phosphoribosyltransferase family. Xpt subfamily. As to quaternary structure, homodimer.

It is found in the cytoplasm. It catalyses the reaction XMP + diphosphate = xanthine + 5-phospho-alpha-D-ribose 1-diphosphate. It participates in purine metabolism; XMP biosynthesis via salvage pathway; XMP from xanthine: step 1/1. In terms of biological role, converts the preformed base xanthine, a product of nucleic acid breakdown, to xanthosine 5'-monophosphate (XMP), so it can be reused for RNA or DNA synthesis. The sequence is that of Xanthine phosphoribosyltransferase from Pseudomonas fluorescens (strain ATCC BAA-477 / NRRL B-23932 / Pf-5).